We begin with the raw amino-acid sequence, 342 residues long: tRNA-specific 2-thiouridylase MnmA (342 aa).

Residues Leu-6–Ser-13 and Leu-32 contribute to the ATP site. Cys-92 serves as the catalytic Nucleophile. Cys-92 and Cys-191 are joined by a disulfide. Gly-116 is a binding site for ATP. An interaction with tRNA region spans residues Lys-138–Gln-140. Residue Cys-191 is the Cysteine persulfide intermediate of the active site. The interval Arg-293–Tyr-294 is interaction with tRNA.

The protein belongs to the MnmA/TRMU family.

Its subcellular location is the cytoplasm. It catalyses the reaction S-sulfanyl-L-cysteinyl-[protein] + uridine(34) in tRNA + AH2 + ATP = 2-thiouridine(34) in tRNA + L-cysteinyl-[protein] + A + AMP + diphosphate + H(+). Its function is as follows. Catalyzes the 2-thiolation of uridine at the wobble position (U34) of tRNA, leading to the formation of s(2)U34. The protein is tRNA-specific 2-thiouridylase MnmA of Helicobacter pylori (strain HPAG1).